A 663-amino-acid polypeptide reads, in one-letter code: Translation factor GUF1, mitochondrial (663 aa).

The transit peptide at 1–44 directs the protein to the mitochondrion; the sequence is MRGCLQSVRWLTTALRRPAPQLSCLPFQPFASTSRLFSSCASRA. Residues 65–245 form the tr-type G domain; it reads ERFRNFCIVA…TIVEQIPAPV (181 aa). GTP-binding positions include 74 to 81, 138 to 142, and 192 to 195; these read AHVDHGKS, DTPGH, and NKVD.

This sequence belongs to the TRAFAC class translation factor GTPase superfamily. Classic translation factor GTPase family. LepA subfamily.

It localises to the mitochondrion inner membrane. It catalyses the reaction GTP + H2O = GDP + phosphate + H(+). In terms of biological role, promotes mitochondrial protein synthesis. May act as a fidelity factor of the translation reaction, by catalyzing a one-codon backward translocation of tRNAs on improperly translocated ribosomes. Binds to mitochondrial ribosomes in a GTP-dependent manner. This is Translation factor GUF1, mitochondrial from Coccidioides posadasii (strain C735) (Valley fever fungus).